The sequence spans 312 residues: Taste receptor type 2 member 9 (312 aa).

The Extracellular segment spans residues M1 to Y9. Residues I10 to C32 form a helical membrane-spanning segment. The Cytoplasmic portion of the chain corresponds to I33 to A52. The helical transmembrane segment at I53–F72 threads the bilayer. Over P73–B86 the chain is Extracellular. A helical transmembrane segment spans residues I87–L109. At K110–K128 the chain is on the cytoplasmic side. Residues V129–V146 traverse the membrane as a helical segment. Residues X147–Q180 are Extracellular-facing. N164 is a glycosylation site (N-linked (GlcNAc...) asparagine). A helical transmembrane segment spans residues L181–F203. At S204–V234 the chain is on the cytoplasmic side. Residues I235–I257 form a helical membrane-spanning segment. Topologically, residues P258 to K261 are extracellular. A helical transmembrane segment spans residues L262–M284. Over G285 to P312 the chain is Cytoplasmic.

It belongs to the G-protein coupled receptor T2R family.

Its subcellular location is the membrane. In terms of biological role, gustducin-coupled receptor implicated in the perception of bitter compounds in the oral cavity and the gastrointestinal tract. Signals through PLCB2 and the calcium-regulated cation channel TRPM5. The chain is Taste receptor type 2 member 9 (TAS2R9) from Pongo pygmaeus (Bornean orangutan).